A 406-amino-acid polypeptide reads, in one-letter code: Tryptophan synthase beta chain (406 aa).

Lysine 99 carries the N6-(pyridoxal phosphate)lysine modification.

This sequence belongs to the TrpB family. In terms of assembly, tetramer of two alpha and two beta chains. The cofactor is pyridoxal 5'-phosphate.

The catalysed reaction is (1S,2R)-1-C-(indol-3-yl)glycerol 3-phosphate + L-serine = D-glyceraldehyde 3-phosphate + L-tryptophan + H2O. The protein operates within amino-acid biosynthesis; L-tryptophan biosynthesis; L-tryptophan from chorismate: step 5/5. The beta subunit is responsible for the synthesis of L-tryptophan from indole and L-serine. In Phenylobacterium zucineum (strain HLK1), this protein is Tryptophan synthase beta chain.